The following is a 211-amino-acid chain: Large ribosomal subunit protein uL4 (211 aa).

A disordered region spans residues 40-87; that stretch reads QQAHTRQGTASTLTRSEVRGGGRKPYKQKGTGRARQGSIRTPLRPGGG. The segment covering 41–54 has biased composition (polar residues); sequence QAHTRQGTASTLTR. The segment covering 60–71 has biased composition (basic residues); the sequence is GGRKPYKQKGTG.

It belongs to the universal ribosomal protein uL4 family. As to quaternary structure, part of the 50S ribosomal subunit.

Its function is as follows. One of the primary rRNA binding proteins, this protein initially binds near the 5'-end of the 23S rRNA. It is important during the early stages of 50S assembly. It makes multiple contacts with different domains of the 23S rRNA in the assembled 50S subunit and ribosome. Forms part of the polypeptide exit tunnel. The polypeptide is Large ribosomal subunit protein uL4 (Synechococcus sp. (strain WH7803)).